A 369-amino-acid polypeptide reads, in one-letter code: 5-amino-6-(D-ribitylamino)uracil--L-tyrosine 4-hydroxyphenyl transferase (369 aa).

One can recognise a Radical SAM core domain in the interval 56–292 (VTFVVNRNIN…AVARLYFGPL (237 aa)). [4Fe-4S] cluster contacts are provided by Cys-70, Cys-74, and Cys-77.

Belongs to the radical SAM superfamily. CofH family. In terms of assembly, consists of two subunits, CofG and CofH. Requires [4Fe-4S] cluster as cofactor.

The enzyme catalyses 5-amino-6-(D-ribitylamino)uracil + L-tyrosine + S-adenosyl-L-methionine = 5-amino-5-(4-hydroxybenzyl)-6-(D-ribitylimino)-5,6-dihydrouracil + 2-iminoacetate + 5'-deoxyadenosine + L-methionine + H(+). Its pathway is cofactor biosynthesis; coenzyme F0 biosynthesis. Its function is as follows. Catalyzes the radical-mediated synthesis of 5-amino-5-(4-hydroxybenzyl)-6-(D-ribitylimino)-5,6-dihydrouracil from 5-amino-6-(D-ribitylamino)uracil and L-tyrosine. The protein is 5-amino-6-(D-ribitylamino)uracil--L-tyrosine 4-hydroxyphenyl transferase of Methanopyrus kandleri (strain AV19 / DSM 6324 / JCM 9639 / NBRC 100938).